The primary structure comprises 214 residues: Endothelial cell-specific chemotaxis regulator (214 aa).

The signal sequence occupies residues 1–18; the sequence is MRLGSAILGLLLLQGYSS. At 19–130 the chain is on the extracellular side; sequence QPTTTQTSQE…PTPTSESVLT (112 aa). Residues 23–107 form a disordered region; the sequence is TQTSQEILQK…DATPSPETTS (85 aa). Over residues 28–57 the composition is skewed to polar residues; it reads EILQKSSQVSLVSNQPVTPRSSTMDKQSLS. The span at 80-90 shows a compositional bias: low complexity; it reads RSSSSSSSSSS. The helical transmembrane segment at 131–151 threads the bilayer; that stretch reads VAAFGVISFIVILVVVVIILV. At 152–214 the chain is on the cytoplasmic side; that stretch reads SVVSLRFKCR…KGSMSAEKIL (63 aa). The tract at residues 163–184 is disordered; sequence NKESEDPQKPGSSGLSESCSTA. Over residues 172-184 the composition is skewed to polar residues; sequence PGSSGLSESCSTA. Phosphoserine is present on residues Ser-204 and Ser-207.

This sequence belongs to the ECSCR family. As to quaternary structure, interacts with FLNA. Interacts with the 20S proteasome subunit PSMA7. In terms of processing, may be heavily O-glycosylated. As to expression, expressed in all tissues examined, highest expression was observed in lung and spleen endothelial cells.

The protein resides in the cell membrane. The protein localises to the cytoplasm. Regulates endothelial chemotaxis and tube formation. Has a role in angiogenesis and apoptosis via modulation of the actin cytoskeleton and facilitation of proteasomal degradation of the apoptosis inhibitors BIRC3/IAP1 and BIRC2/IAP2. The polypeptide is Endothelial cell-specific chemotaxis regulator (Ecscr) (Mus musculus (Mouse)).